The chain runs to 409 residues: Putative competence-damage inducible protein (409 aa).

This sequence belongs to the CinA family.

In Clostridium tetani (strain Massachusetts / E88), this protein is Putative competence-damage inducible protein.